Consider the following 677-residue polypeptide: O-fucosyltransferase 27 (677 aa).

A helical; Signal-anchor for type II membrane protein transmembrane segment spans residues 15–35 (WIGLLGLVLSAFSLLVHFLLA). Residue N130 is glycosylated (N-linked (GlcNAc...) asparagine). The segment at 410-437 (PPSIEVETKHDSLKSTRQRPQPLPPPPA) is disordered. N542 and N592 each carry an N-linked (GlcNAc...) asparagine glycan. Positions 619–677 (NAEKEEDLDEEDLSSSGLFFGHKESGGNNNGNNETVNSEANNKEEGQLEDQEELEGSER) are disordered. The segment covering 622–631 (KEEDLDEEDL) has biased composition (acidic residues). Low complexity predominate over residues 644 to 658 (GGNNNGNNETVNSEA). An N-linked (GlcNAc...) asparagine glycan is attached at N651. The segment covering 665–677 (QLEDQEELEGSER) has biased composition (acidic residues).

The protein belongs to the glycosyltransferase GT106 family.

It is found in the membrane. Its pathway is glycan metabolism. In Arabidopsis thaliana (Mouse-ear cress), this protein is O-fucosyltransferase 27.